Consider the following 1859-residue polypeptide: MNSTPGDTRDAPAPSHPAPSHRQCLLPSVAHTPSVTEVTPAKKITFLKRGDPQFAGVRLAVHQRTFKTFSSLMDELSQRMPLSFGVRSVTTPRGLHGLSALEQLQDGGCYLCSDRKPPKTSREPGRLQRKSPSAGQAQVFQGGHEAPETSYSWKGPVAPRRLTLVKNGDPRRQQTVVLSHKNTRSLAAFLGKASELLRFPVKQVYTTRGKKVDSLQTLLDGPSVLVCAGNEAFRCLEMENDRGNRTRKLSSVTARSERGCWGPNAKQSVIHSRGRSGGKLRQVSLTSERSGLSDHPASGHRAWAGPALDRCPQDMPVPPGSLVAADDVEKKVCMNEDGSLSVEMKVRFQLLGEDTLRWSQRVGQASVFTAASGKGQDPREADRFCCRQEGYPWGILKPGAQGLGSYDGGCQEAFDVGQKSQPSYDIWRNPLATPEGTGPTPRRRWGLAKLSGCKSHWRQEANHRKGHDKDNLSRVSTPRHPRSVQPGSCCPWTPDGDTGSDTLHPVSSASSHNETDLESGEGLCLEDTGPHGSRPETQSTERALSDTSVSAKSREESSEGGGQLHRSSSQARVMASREQVTKGDNPCISTQSHLPLNHMGLQTEKYRQGTRGWEVSGEPELRLALVPGHSGSQDTQRDALPAPACAPAQWRQRKQKRPASVECLPSVSVPYQVAQKGHARQDHYYRDTQSSLDTALQMPMPQEREQACPGSPAPQSPSNSPSAGNQASEDLRSPFSSSLDLQEPQATSKATTIAVSGSDCVCHSTRSVEPAGDTKCQAHSSTPTPAHRGELGCLWDKAGTTPEPFSFSVLLDRCPEADDPRTYHDCCCLQAVPSSPLAAPSGQTQTSISEACLGGSSFCPTPPKEQTCFGRESASNGSTSSGHSRADGFAGPRRTLLVKSPGVRGSLEEREADGGVTPSALPYASPDAVVREWLGNIPEKPVLMTYEMADENTEVPSDGPEGPKEDSLKVLGEPSQAKQQPPEGATNEHPEPAGVLSGPGSVCCRLGGDLHPDATSGERLKAPAEAGIGEGARVDHGVSLCALPTKVAASTQIMKALLGSKPGRPSSLPEVSSTVAQRLSSSAGAFIACLARLHFFDESLGPLDGKVRLEESPKYQEMLRLFQTLWPGSELWQGQLDFSLRKLTSHQALLGTEDFTPTSSSGVDVSSGSGGSGESSVPCVMDNTLAPEKRDLPLKIPSQRPDSRNQGYPELVGHSTVSSVSQVRACATGGEETGKGGRKQTWGNAPEQSVHSTMLEGDALSEETEGRVRERLQENSVHGKGLPEEGVRVCSQEMLAAGSQDGAGSPEDTRVPTDEAGADAASGGLWPLDGREEPTESPQHFSESNSRVREHQSAHKLELGLEEVSRLDARGCKQACIKASSGTMAHKGSLDPDPIWVSKLLKKIEKAFMAHLADATAELRARWDLHDNHLLDQMVTELEQDVGRRLQASTVMEVRKIQSRAGRMVPEPPREALRGQASLQTEQRRRRLQGLRNFSAVPGQGPLSLTLEDGPTLKTALGTKSGAEPAEDEFCPCEICLKKKRTPRFPKDAATVSGAPVRKAFDLQQILQSKKGGSSNREAMEVAPQRTGRMLSQEDLGTVQGADEKQGLGVAEGEEGEGKQRLRAEEDPEILKTEGSGCCAPEEDEATEEDGEICIGTAQESQQLEGTEMGKEGTLPQSFRDGGTLEAPARQGTHSVEIQEASRERQQEVEGRHQDVKEDSPWVSSGESQGRVGSENTSLDQEGRLLNHHQRPGPQSHHTACSSRALSLDNSSQVSQKGSDGDLTSGDLKCTKAKNSRVLHAEKKVPVMYPERSSSEQEVPSSPRLPKQGKGEDEGSAGSLACTQVGGKVDGFGQDDLDF.

Disordered stretches follow at residues 1-22 (MNST…PSHR) and 115-154 (RKPP…YSWK). The Doublecortin 1 domain occupies 42–126 (KKITFLKRGD…PPKTSREPGR (85 aa)). Basic and acidic residues predominate over residues 115-126 (RKPPKTSREPGR). Over residues 130 to 139 (KSPSAGQAQV) the composition is skewed to polar residues. Residues 160–239 (RRLTLVKNGD…NEAFRCLEME (80 aa)) enclose the Doublecortin 2 domain. 10 disordered regions span residues 263-301 (PNAK…SGHR), 426-445 (IWRN…RRRW), 457-593 (WRQE…TQSH), 700-750 (MPQE…TSKA), 868-920 (CFGR…TPSA), 952-997 (NTEV…GVLS), 1152-1211 (TEDF…YPEL), 1227-1255 (ATGG…STML), 1298-1350 (GSQD…RVRE), and 1567-1859 (LQSK…DLDF). Positions 457 to 472 (WRQEANHRKGHDKDNL) are enriched in basic and acidic residues. Polar residues-rich tracts occupy residues 499 to 512 (GSDT…ASSH) and 535 to 551 (PETQ…SVSA). The segment covering 716 to 728 (SPSNSPSAGNQAS) has biased composition (low complexity). Residues 734–750 (PFSSSLDLQEPQATSKA) show a composition bias toward polar residues. Residues 870–883 (GRESASNGSTSSGH) show a composition bias toward low complexity. Polar residues-rich tracts occupy residues 1241–1252 (TWGNAPEQSVHS), 1336–1345 (ESPQHFSESN), and 1567–1577 (LQSKKGGSSNR). Basic and acidic residues predominate over residues 1616–1632 (GEGKQRLRAEEDPEILK). The segment covering 1641–1652 (PEEDEATEEDGE) has biased composition (acidic residues). Residues 1700–1720 (EASRERQQEVEGRHQDVKEDS) show a composition bias toward basic and acidic residues. A compositionally biased stretch (polar residues) spans 1756–1778 (SHHTACSSRALSLDNSSQVSQKG).

Interacts with RP1; has a synergistic effect with RP1 in photoreceptor differentiation. As to expression, retinal-specific; expressed in photoreceptor.

It is found in the cytoplasm. Its subcellular location is the cytoskeleton. The protein resides in the cilium axoneme. The protein localises to the cell projection. It localises to the cilium. It is found in the photoreceptor outer segment. Required for the differentiation of photoreceptor cells. Plays a role in the organization of outer segment of rod and cone photoreceptors. This chain is Retinitis pigmentosa 1-like 1 protein (Rp1l1), found in Mus musculus (Mouse).